Here is a 327-residue protein sequence, read N- to C-terminus: tRNA uridine(34) hydroxylase (327 aa).

The 97-residue stretch at 122–218 folds into the Rhodanese domain; that stretch reads QENRCLVLDV…YGLKMGTGKW (97 aa). Cys-178 (cysteine persulfide intermediate) is an active-site residue.

Belongs to the TrhO family.

It carries out the reaction uridine(34) in tRNA + AH2 + O2 = 5-hydroxyuridine(34) in tRNA + A + H2O. Its function is as follows. Catalyzes oxygen-dependent 5-hydroxyuridine (ho5U) modification at position 34 in tRNAs. This is tRNA uridine(34) hydroxylase from Chlamydia trachomatis serovar L2 (strain ATCC VR-902B / DSM 19102 / 434/Bu).